A 139-amino-acid polypeptide reads, in one-letter code: MRHARGYRRLNRTHEHRKALFANMAGSLIEHEQIKTTLPKAKELRPIIEKLITLAKRGDLHARRQAAAQLKEDRHVARLFEILGPRYAERAGGYVRVLKAGFRYGDMAPMAIIEFVDRDPNAKGAADKARTAAEEALEE.

Belongs to the bacterial ribosomal protein bL17 family. As to quaternary structure, part of the 50S ribosomal subunit. Contacts protein L32.

This Cereibacter sphaeroides (strain ATCC 17029 / ATH 2.4.9) (Rhodobacter sphaeroides) protein is Large ribosomal subunit protein bL17.